The primary structure comprises 586 residues: Transcription elongation regulator 1-like protein (586 aa).

Positions 1 to 30 (MQAGARFQRRRRQLQQQQPRRRQPLLWPMD) are disordered. The span at 7–23 (FQRRRRQLQQQQPRRRQ) shows a compositional bias: basic residues. Residues 148 to 181 (TPIGKSWIDKRIPNCKIFFNNSFALDSTWIHPEE) enclose the WW 1 domain. Disordered stretches follow at residues 281-344 (TSPV…PGSP) and 378-448 (DLNR…QILL). The span at 306–317 (KSRDGDKEDKEP) shows a compositional bias: basic and acidic residues. The WW 2 domain occupies 339–372 (PVPGSPWCVVWTGDDRVFFFNPTMHLSVWEKPMD). Basic and acidic residues-rich tracts occupy residues 378–387 (DLNRIIEDPP), 411–421 (DQDVKTKRNRT), and 428–439 (KPEEAKREDKGT). FF domains follow at residues 450–503 (LEER…FVKT) and 515–570 (KLLL…FILI).

This Homo sapiens (Human) protein is Transcription elongation regulator 1-like protein (TCERG1L).